Reading from the N-terminus, the 513-residue chain is MLRSNVSRIDPKRRNVLDHRKKQFAEAAYKDTDYPHRLNFYSTPPTADITIEQFEQWAIDRLRILAELEACSFRNKTPAETASHMKPLLDKYLPLDTNSSSSSQLFAQRQKDHYSHFILRLAFASTEDLRRRFTRVETMLFRMRLNADDGRERAAFINSLNLDWETVSDEEKRELAAELAATASFGGYKKGQQQQQQYEEDQQTWCKVSWLRVPELVEQRRVFLRQGYAYVPAREQQAMVVSEFSSRLERQLELTARALPRLDEDDRLTPILAHLSKNFITPDASYVGTSSAISSADISARNIDTLVNNHHFPACMSHLHRTLRRDAHLKHYGRLQYTLFLKGIGLNLEECLLFWRQSFNKITDDTFNKEYRYNVRHTYGDVGGDSNRRGGGYSPYSCQKILTEHPPGPGEAHGCPYRHFNMENLQTLLQQGMGVTDRGVLNGVKEDKEKQKFHMACNRVFEHLHKEELKKAKDEGIMTAAQLETIVHPNEYFKRSYLLKNMGKMQGDVKMEG.

[4Fe-4S] cluster is bound by residues Cys315, Cys398, Cys415, and Cys457.

It belongs to the eukaryotic-type primase large subunit family. Heterodimer of a small subunit and a large subunit. The cofactor is [4Fe-4S] cluster.

Its function is as follows. DNA primase is the polymerase that synthesizes small RNA primers for the Okazaki fragments made during discontinuous DNA replication. This Neurospora crassa (strain ATCC 24698 / 74-OR23-1A / CBS 708.71 / DSM 1257 / FGSC 987) protein is Probable DNA primase large subunit.